The chain runs to 444 residues: Phosphoglucosamine mutase (444 aa).

Ser-102 (phosphoserine intermediate) is an active-site residue. Ser-102, Asp-239, Asp-241, and Asp-243 together coordinate Mg(2+). Position 102 is a phosphoserine (Ser-102).

This sequence belongs to the phosphohexose mutase family. It depends on Mg(2+) as a cofactor. Activated by phosphorylation.

It carries out the reaction alpha-D-glucosamine 1-phosphate = D-glucosamine 6-phosphate. In terms of biological role, catalyzes the conversion of glucosamine-6-phosphate to glucosamine-1-phosphate. The polypeptide is Phosphoglucosamine mutase (Saccharopolyspora erythraea (strain ATCC 11635 / DSM 40517 / JCM 4748 / NBRC 13426 / NCIMB 8594 / NRRL 2338)).